Consider the following 653-residue polypeptide: Zinc finger protein 59 (653 aa).

The region spanning 14–86 is the KRAB domain; the sequence is VTFRDVAVDF…VNEETGRPSP (73 aa). 16 consecutive C2H2-type zinc fingers follow at residues 172-194, 200-222, 256-278, 284-306, 312-334, 340-362, 368-390, 396-418, 424-446, 452-474, 480-502, 508-530, 536-558, 564-586, 592-614, and 620-642; these read YECKECGKCFGCRSTLTQHQSVH, YECKECGKAFRLPQQLTRHQKCH, FACRECGKSFNRVSSLVEHGLIH, YECNECGKAFKRHRSFVRHQKIH, FQCKDCGKGFIVLAHLTRHQSSH, FECEECGKKFRTARHLVKHQRIH, FECNVCGSAFRLQLYLSEHQKTH, LECNVCGKAFRLQVYLSEHLKTH, FKCKLCGSAFPNKYQLNKHLTVH, YQCKECGKCFRQRSKLTEHESIH, FQCEECGKFFRLNTLLIHHQKSH, FECKECGKAFLLPSQLNSHKIVH, FECKVCGKSFKRESNLIQHGAVH, YECSECGKGFIHRSSLFHHRKIH, FKCQECGKAFVVLAYLIQHQSIH, and FECELCGSAFRCRSQLNKHLRIH.

The protein belongs to the krueppel C2H2-type zinc-finger protein family. As to expression, expressed predominantly in the testis (at protein level).

The protein resides in the nucleus. Its function is as follows. May have a role during differentiation processes. The chain is Zinc finger protein 59 (Zfp59) from Mus musculus (Mouse).